Here is a 299-residue protein sequence, read N- to C-terminus: Ribonuclease 3-like protein 3 (299 aa).

The RNase III domain occupies 39 to 183 (VAAVESLLGY…LIGAIYCDSN (145 aa)). Glutamate 79, aspartate 169, and glutamate 172 together coordinate Mg(2+). A DRBM domain is found at 209 to 273 (HPVSELFEFC…AKAALDKLKE (65 aa)). The disordered stretch occupies residues 274-299 (TLGQSQTEPMSAEVSEQFNKIDLTGS). Over residues 275–291 (LGQSQTEPMSAEVSEQF) the composition is skewed to polar residues.

The cofactor is Mg(2+). Requires Mn(2+) as cofactor.

In terms of biological role, cleaves double-stranded RNA (dsRNA). The protein is Ribonuclease 3-like protein 3 of Oryza sativa subsp. japonica (Rice).